Consider the following 160-residue polypeptide: Photosystem II extrinsic protein V (160 aa).

An N-terminal signal peptide occupies residues 1 to 25 (MKRFFLVAIASVLFFFNTMVGSANA). Heme c contacts are provided by C62, C65, H66, and H117.

It belongs to the cytochrome c family. PsbV subfamily. In terms of assembly, PSII is composed of 1 copy each of membrane proteins PsbA, PsbB, PsbC, PsbD, PsbE, PsbF, PsbH, PsbI, PsbJ, PsbK, PsbL, PsbM, PsbT, PsbX, PsbY, PsbZ, Psb30/Ycf12, peripheral proteins PsbO, CyanoQ (PsbQ), PsbU, PsbV and a large number of cofactors. It forms dimeric complexes. The cyanobacterial oxygen-evolving complex is composed of PsbO, CyanoQ (PsbQ), PsbV and PsbU. It depends on heme c as a cofactor.

The protein resides in the cellular thylakoid membrane. Its function is as follows. One of the extrinsic, lumenal subunits of photosystem II (PSII). PSII is a light-driven water plastoquinone oxidoreductase, using light energy to abstract electrons from H(2)O, generating a proton gradient subsequently used for ATP formation. The extrinsic proteins stabilize the structure of photosystem II oxygen-evolving complex (OEC), the ion environment of oxygen evolution and protect the OEC against heat-induced inactivation. Low-potential cytochrome c that plays a role in the OEC of PSII, required for normal function or stabilization of PSII. This is Photosystem II extrinsic protein V from Synechocystis sp. (strain ATCC 27184 / PCC 6803 / Kazusa).